We begin with the raw amino-acid sequence, 282 residues long: Probable endonuclease 4 (282 aa).

The Zn(2+) site is built by His71, His111, Glu147, Asp181, His184, His218, Asp231, His233, and Glu263.

It belongs to the AP endonuclease 2 family. It depends on Zn(2+) as a cofactor.

The catalysed reaction is Endonucleolytic cleavage to 5'-phosphooligonucleotide end-products.. In terms of biological role, endonuclease IV plays a role in DNA repair. It cleaves phosphodiester bonds at apurinic or apyrimidinic (AP) sites, generating a 3'-hydroxyl group and a 5'-terminal sugar phosphate. This Protochlamydia amoebophila (strain UWE25) protein is Probable endonuclease 4.